The chain runs to 820 residues: Trimethylamine-N-oxide reductase (820 aa).

The segment at residues 1–33 (MAITRRSFLKGVATTSAASVIGPSLLASASANA) is a signal peptide (tat-type signal). Ser-179 contacts Mo-bis(molybdopterin guanine dinucleotide).

This sequence belongs to the prokaryotic molybdopterin-containing oxidoreductase family. The cofactor is Mo-bis(molybdopterin guanine dinucleotide). In terms of processing, predicted to be exported by the Tat system. The position of the signal peptide cleavage has not been experimentally proven.

It is found in the periplasm. The catalysed reaction is trimethylamine + 2 Fe(III)-[cytochrome c] + H2O = trimethylamine N-oxide + 2 Fe(II)-[cytochrome c] + 3 H(+). In terms of biological role, reduces trimethylamine-N-oxide (TMAO) into trimethylamine; an anaerobic reaction coupled to energy-yielding reactions. This chain is Trimethylamine-N-oxide reductase (torA), found in Vibrio vulnificus (strain YJ016).